The following is a 170-amino-acid chain: Phosphopantetheine adenylyltransferase (170 aa).

Threonine 14 contributes to the substrate binding site. Residues 14–15 and histidine 22 each bind ATP; that span reads TF. Substrate-binding residues include lysine 46, leucine 78, and arginine 92. ATP-binding positions include 93-95, glutamate 103, and 128-134; these read GLR and WLYISST.

The protein belongs to the bacterial CoaD family. In terms of assembly, homohexamer. Requires Mg(2+) as cofactor.

It localises to the cytoplasm. The enzyme catalyses (R)-4'-phosphopantetheine + ATP + H(+) = 3'-dephospho-CoA + diphosphate. It functions in the pathway cofactor biosynthesis; coenzyme A biosynthesis; CoA from (R)-pantothenate: step 4/5. Its function is as follows. Reversibly transfers an adenylyl group from ATP to 4'-phosphopantetheine, yielding dephospho-CoA (dPCoA) and pyrophosphate. The sequence is that of Phosphopantetheine adenylyltransferase from Oleidesulfovibrio alaskensis (strain ATCC BAA-1058 / DSM 17464 / G20) (Desulfovibrio alaskensis).